The primary structure comprises 256 residues: Rhamnolipids biosynthesis 3-oxoacyl-[acyl-carrier-protein] reductase (256 aa).

14 to 38 (VTGGSRGIGQMIAQGLLEAGARVFI) contributes to the NADP(+) binding site. Serine 148 contributes to the substrate binding site. Tyrosine 162 serves as the catalytic Proton acceptor.

This sequence belongs to the short-chain dehydrogenases/reductases (SDR) family.

The catalysed reaction is a (3R)-hydroxyacyl-[ACP] + NADP(+) = a 3-oxoacyl-[ACP] + NADPH + H(+). Its pathway is lipid metabolism; rhamnolipid biosynthesis. Functionally, required for the synthesis of the beta-hydroxy acid moiety of rhamnolipids. The sequence is that of Rhamnolipids biosynthesis 3-oxoacyl-[acyl-carrier-protein] reductase (rhlG) from Pseudomonas aeruginosa (strain ATCC 15692 / DSM 22644 / CIP 104116 / JCM 14847 / LMG 12228 / 1C / PRS 101 / PAO1).